Here is a 359-residue protein sequence, read N- to C-terminus: MPPFISHFFLLSTFASLALCSFYCKNPGYPCLNGGTCLYNGECNCTSGFRGFNCGLDSSTISAACTVECHNKGICYNGDKCYCTKDYMGPTCQQAYDFADCNKSSMKIKAYRPTEFNGEMFLMQSMFGCKLAEVTSTIAGYKQYELDVPHDSTGPCKLKKTIDATTGDVHFEVNVSTIHHAGQFGMYDGLKTVSCHYSSRDQAIVKDVTNQDLIVSVTASDGSTPNLQEIPSNDVIHLTFKPVNLPGGYKAVKILDLEMYSVVEQWNEINSMVLLKDQCMTQKADELGYSVSNEVDGTSGRAILKAIPLFENVPAPVHFNYRLRFCRNRCILKSCASPSLKPMPKGEIFKHQGQGIRIV.

A signal peptide spans 1 to 20 (MPPFISHFFLLSTFASLALC). 2 consecutive EGF-like domains span residues 21-55 (SFYCKNPGYPCLNGGTCLYNGECNCTSGFRGFNCG) and 61-93 (ISAACTVECHNKGICYNGDKCYCTKDYMGPTCQ). Cystine bridges form between Cys-24-Cys-37, Cys-31-Cys-43, Cys-45-Cys-54, Cys-65-Cys-75, Cys-69-Cys-81, and Cys-83-Cys-92.

In terms of tissue distribution, prismatic layer of shell (at protein level). Expressed primarily in the mantle with highest level in the mantle edge and lower level in the mantle pallium.

The protein resides in the secreted. The polypeptide is EGF-like domain containing protein 2 (Margaritifera margaritifera (Freshwater pearl mussel)).